Here is a 460-residue protein sequence, read N- to C-terminus: Flavin-containing monooxygenase FMO GS-OX-like 9 (460 aa).

An FAD-binding site is contributed by 20-25 (GAGPAG). 222–227 (GNSMSG) is an NADP(+) binding site.

This sequence belongs to the FMO family. FAD is required as a cofactor.

In terms of biological role, catalyzes the conversion of methylthioalkyl glucosinolates of any chain length into methylsulfinylalkyl glucosinolates. The chain is Flavin-containing monooxygenase FMO GS-OX-like 9 from Arabidopsis thaliana (Mouse-ear cress).